Reading from the N-terminus, the 206-residue chain is Imidazoleglycerol-phosphate dehydratase (206 aa).

Positions 1–24 are disordered; it reads MDPTASGRQAPRNPRQATVQRETK.

Belongs to the imidazoleglycerol-phosphate dehydratase family.

The protein localises to the cytoplasm. It carries out the reaction D-erythro-1-(imidazol-4-yl)glycerol 3-phosphate = 3-(imidazol-4-yl)-2-oxopropyl phosphate + H2O. It participates in amino-acid biosynthesis; L-histidine biosynthesis; L-histidine from 5-phospho-alpha-D-ribose 1-diphosphate: step 6/9. This Acidothermus cellulolyticus (strain ATCC 43068 / DSM 8971 / 11B) protein is Imidazoleglycerol-phosphate dehydratase.